A 274-amino-acid polypeptide reads, in one-letter code: Large ribosomal subunit protein uL2 (274 aa).

2 disordered regions span residues 28–55 (APHA…RHVG) and 224–274 (VAMN…RRRK).

This sequence belongs to the universal ribosomal protein uL2 family. In terms of assembly, part of the 50S ribosomal subunit. Forms a bridge to the 30S subunit in the 70S ribosome.

In terms of biological role, one of the primary rRNA binding proteins. Required for association of the 30S and 50S subunits to form the 70S ribosome, for tRNA binding and peptide bond formation. It has been suggested to have peptidyltransferase activity; this is somewhat controversial. Makes several contacts with the 16S rRNA in the 70S ribosome. In Pseudomonas putida (strain W619), this protein is Large ribosomal subunit protein uL2.